Consider the following 485-residue polypeptide: MERPALLQNGEIGTMESPTTRLASKPFPKPFSIESLIANQTPATATPPSPPEERDQEQEAEQEQELSARAMVASSALGLTQFPLYNPWLHGYFAQNHERLTHLIAGGCYLPSSPAGHPAAQQPQAQAQPQPPPPHPPTHALEKQLPPTLPHPLDTRFLPFNPAAAGVAPTDLSYRRLAELMNQDYVHSLSVHARLQHMAAAGRMHEDQANPGMAQLQEPTPPQAHSSPAKSGSHSPMEPALDVGMDEDFECSGDSCSDISLTMSPRNYNGEMDKSRNGAYTNSDSEDCSDDEGAQSRHEGGGMGGKDSQGNGSSSNSKSRRRRTAFTSEQLLELEREFHAKKYLSLTERSQIATSLKLSEVQVKIWFQNRRAKWKRVKAGLTSHGLGRNGTTSGTKIVVPIPVHVNRFAVRSQHQQLEKMCLSGPKPDLRKKLSAEAIGGFEKFSGSTNASSPSGGPVGLGVGVGVGVGVGLGVSTPLSLARSIY.

3 disordered regions span residues 1–65 (MERP…QEQE), 114–157 (PAGH…DTRF), and 212–325 (GMAQ…RRTA). Over residues 54–64 (RDQEQEAEQEQ) the composition is skewed to acidic residues. Residues 114–128 (PAGHPAAQQPQAQAQ) show a composition bias toward low complexity. Polar residues-rich tracts occupy residues 223–234 (QAHSSPAKSGSH) and 254–267 (DSCS…SPRN). Residues 284 to 293 (DSEDCSDDEG) are compositionally biased toward acidic residues. A compositionally biased stretch (low complexity) spans 308–317 (SQGNGSSSNS). Residues 319–378 (SRRRRTAFTSEQLLELEREFHAKKYLSLTERSQIATSLKLSEVQVKIWFQNRRAKWKRVK) constitute a DNA-binding region (homeobox).

As to expression, expressed in the neuroectodermal and mesectodermal cells at the ventral midline of stage 8 embryos, Subsequently, expression domains in the CNS widen and have their most anterior border in the posterior deutocerebrum. Oc/otd and unpg are mutual repressors at the interface of their brain-specific expression domains. Expression fades during germ band retraction and is then restricted to subset of cells by stage 14. Expressed in the founder cells of the cerebral branch within the first tracheal metamere. Outside the CNS, expression is seen in two clusters of ectodermal cells located laterally within the labial and first thoracic segments of stage 9 embryos. By stage 13, the expression is detected in a few cells close to the dorsal midline of the embryos.

The protein localises to the nucleus. Plays a regulatory role in neural branching of the tracheae: segment-specific aspects of these neural branching patterns appear to be generated by homeotic regulation of expression. May have a role with oc/otd in the postembryonic development of the brain. This is Homeobox protein unplugged from Drosophila melanogaster (Fruit fly).